Consider the following 243-residue polypeptide: Probable transcriptional regulatory protein BP2308 (243 aa).

The interval 1–21 (MAGHSKWANIQHRKGRQDAKR) is disordered.

This sequence belongs to the TACO1 family.

It localises to the cytoplasm. The sequence is that of Probable transcriptional regulatory protein BP2308 from Bordetella pertussis (strain Tohama I / ATCC BAA-589 / NCTC 13251).